An 897-amino-acid polypeptide reads, in one-letter code: 3'-5' exonuclease DinG (897 aa).

In terms of domain architecture, Exonuclease spans 8–161 (VVDLETTGNQ…DEDAATTAKL (154 aa)). One can recognise a Helicase ATP-binding domain in the interval 241–496 (SKAVDQLGLT…KAIDQLEKQR (256 aa)). 276 to 283 (ASLGSGKS) is an ATP binding site. The DEAH box signature appears at 448-451 (DEAH). The Helicase C-terminal domain maps to 703 to 893 (NIDEYVASIV…QFGKLLRQIQ (191 aa)).

This sequence belongs to the helicase family. DinG subfamily. Type 2 sub-subfamily.

In terms of biological role, 3'-5' exonuclease. The polypeptide is 3'-5' exonuclease DinG (Staphylococcus aureus (strain MSSA476)).